Consider the following 898-residue polypeptide: Chitin synthase 1 (898 aa).

Residues 1-154 (MDPRYGAQPM…PPQQGGGIQR (154 aa)) are disordered. A compositionally biased stretch (pro residues) spans 9-21 (PMPPRRSPSPGHP). Polar residues-rich tracts occupy residues 64–75 (DHLSLNAAQSVD) and 136–146 (DVPSEQYQDPP). 5 consecutive transmembrane segments (helical) span residues 441–461 (SAFG…YVAL), 540–560 (RWLN…LDFL), 570–590 (FAFF…WFAI), 616–636 (ILGV…FVLS), and 651–671 (MCWF…FISV). N-linked (GlcNAc...) asparagine glycosylation is present at Asn-685. Helical transmembrane passes span 697–717 (MLII…LIML), 726–746 (FAQY…YAFC), 825–845 (GVVL…LSSA), and 870–890 (IVLW…MWFL).

It belongs to the chitin synthase family. Class I subfamily.

Its subcellular location is the cell membrane. The catalysed reaction is [(1-&gt;4)-N-acetyl-beta-D-glucosaminyl](n) + UDP-N-acetyl-alpha-D-glucosamine = [(1-&gt;4)-N-acetyl-beta-D-glucosaminyl](n+1) + UDP + H(+). Polymerizes chitin, a structural polymer of the cell wall and septum, by transferring the sugar moiety of UDP-GlcNAc to the non-reducing end of the growing chitin polymer. Shows additive effects in septum formation with CHS2, CHS3A, CHS4, CHS5, CHS6 and CHS7. Regulates mycelial growth and conidiation. Involved in virulence and mediates mycotoxin deoxinivalenol (DON) biosynthesis via the regulation of the expression of TRI4, TRI5 and TRI6. The chain is Chitin synthase 1 from Gibberella zeae (strain ATCC MYA-4620 / CBS 123657 / FGSC 9075 / NRRL 31084 / PH-1) (Wheat head blight fungus).